The following is a 497-amino-acid chain: Acetyl-coenzyme A carboxylase carboxyl transferase subunit beta, chloroplastic (497 aa).

The CoA carboxyltransferase N-terminal domain maps to Leu-225–Asp-497. Positions 229, 232, 248, and 251 each coordinate Zn(2+). The C4-type zinc finger occupies Cys-229–Cys-251.

This sequence belongs to the AccD/PCCB family. In terms of assembly, acetyl-CoA carboxylase is a heterohexamer composed of biotin carboxyl carrier protein, biotin carboxylase and 2 subunits each of ACCase subunit alpha and ACCase plastid-coded subunit beta (accD). Zn(2+) serves as cofactor.

The protein resides in the plastid. The protein localises to the chloroplast stroma. It carries out the reaction N(6)-carboxybiotinyl-L-lysyl-[protein] + acetyl-CoA = N(6)-biotinyl-L-lysyl-[protein] + malonyl-CoA. It functions in the pathway lipid metabolism; malonyl-CoA biosynthesis; malonyl-CoA from acetyl-CoA: step 1/1. Component of the acetyl coenzyme A carboxylase (ACC) complex. Biotin carboxylase (BC) catalyzes the carboxylation of biotin on its carrier protein (BCCP) and then the CO(2) group is transferred by the transcarboxylase to acetyl-CoA to form malonyl-CoA. The polypeptide is Acetyl-coenzyme A carboxylase carboxyl transferase subunit beta, chloroplastic (Phalaenopsis aphrodite subsp. formosana (Moth orchid)).